A 182-amino-acid chain; its full sequence is MVPDENDDASDDQSSQLSGLLDQLHTLVEVLADIEEEGGHRHESGRIDRGNARIDYDYDVSIGLGRADGSSYDEEPSSNRSRSEQRSGQQRTTEDSIHVETRGGTSGDELVVVADLPGVTDDDVDVALDTDEQALTLRVDDDVVERVVLDRPDVAITDMTLRNQVLEIRLARTSDTDGGEST.

Acidic residues predominate over residues methionine 1 to aspartate 11. 2 disordered regions span residues methionine 1–leucine 21 and glycine 65–serine 106. Residues aspartate 12 to leucine 21 show a composition bias toward low complexity. Positions threonine 92–threonine 101 are enriched in basic and acidic residues.

This sequence belongs to the gas vesicle GvpH family. In terms of assembly, gvpF to GvpM interact with each other in vitro, and may form multi-subunit complex(es). Interacts with GvpC1. Might interact with GvpA1.

The protein localises to the cytoplasm. The protein resides in the gas vesicle. Proteins GvpF to GvpM might be involved in nucleating gas vesicle formation. May be important for the stability of gas vesicles. Gas vesicles are hollow, gas filled proteinaceous nanostructures found in several microbial planktonic microorganisms. They allow positioning of halobacteria at the optimal depth for growth in the poorly aerated, shallow brine pools of their habitat. Functionally, expression of a 9.5 kb p-vac DNA fragment containing 2 divergently transcribed regions (gvpD-gvpE-gvpF-gvpG-gvpH-gvpI-gvpJ-gvpK-gvpL-gvpM and gvpA-gvpC-gvpN-gvpO) allows H.volcanii to produce gas vesicles. A similar region restores gas vesicle production in H.halobium without the p-vac locus, but it still has the c-vac locus. This chain is Gas vesicle protein H1 (gvpH11), found in Halobacterium salinarum (strain ATCC 700922 / JCM 11081 / NRC-1) (Halobacterium halobium).